The following is a 383-amino-acid chain: uncharacterized protein (383 aa).

The protein belongs to the peptidase M20 family.

This is an uncharacterized protein from Staphylococcus aureus (strain USA300).